Here is a 210-residue protein sequence, read N- to C-terminus: Large ribosomal subunit protein uL3 (210 aa).

This sequence belongs to the universal ribosomal protein uL3 family. Part of the 50S ribosomal subunit. Forms a cluster with proteins L14 and L19.

In terms of biological role, one of the primary rRNA binding proteins, it binds directly near the 3'-end of the 23S rRNA, where it nucleates assembly of the 50S subunit. The polypeptide is Large ribosomal subunit protein uL3 (Natranaerobius thermophilus (strain ATCC BAA-1301 / DSM 18059 / JW/NM-WN-LF)).